Consider the following 837-residue polypeptide: Tuftelin-interacting protein 11 (837 aa).

Positions 1-13 are enriched in basic and acidic residues; that stretch reads MSLSHLYRDGEGH. 3 disordered regions span residues 1–31, 54–73, and 85–136; these read MSLS…DWDL, WAER…RARD, and LKKG…AGGT. Positions 1–50 are required for interaction with DHX15; the sequence is MSLSHLYRDGEGHMDDDEDERENFEITDWDLQNEFNPNRQRHWQTKEEAT. Ser-2 bears the Phosphoserine mark. Residues 14–28 show a composition bias toward acidic residues; that stretch reads MDDDEDERENFEITD. A compositionally biased stretch (basic and acidic residues) spans 54–64; it reads WAERDSDEERP. 2 positions are modified to phosphoserine: Ser-59 and Ser-98. A compositionally biased stretch (acidic residues) spans 91–102; it reads EEAELEDSDDEE. Residues 103–116 show a composition bias toward basic and acidic residues; the sequence is KPVKQDEFPKDFGP. Ser-144 is subject to Phosphoserine. One can recognise a G-patch domain in the interval 149-195; it reads TKGIGQKLLQKMGYVPGRGLGKNAQGIINPIEAKQRKGKGAVGAYGS. Disordered stretches follow at residues 183 to 236 and 287 to 313; these read QRKG…KKKP and HKHS…ARAP. Ser-210 is modified (phosphoserine). Positions 217–231 are enriched in basic and acidic residues; the sequence is EFQKELSQWRKDPSG. Residues 700-705 carry the Nuclear localization signal motif; it reads VKDKFN. The required for nuclear speckle localization stretch occupies residues 710 to 734; it reads IMNRAVSSNVGAYMQPGAREHIAYL.

The protein belongs to the TFP11/STIP family. Identified in the spliceosome C complex. Found in the Intron Large (IL) complex, a post-mRNA release spliceosomal complex containing the excised intron, U2, U5 and U6 snRNPs, and splicing factors. Interacts with TUFT1. Interacts with DHX15; indicative for a recruitment of DHX15 to the IL complex. Interacts with GCFC2.

It localises to the cytoplasm. It is found in the nucleus. In terms of biological role, involved in pre-mRNA splicing, specifically in spliceosome disassembly during late-stage splicing events. Intron turnover seems to proceed through reactions in two lariat-intron associated complexes termed Intron Large (IL) and Intron Small (IS). In cooperation with DHX15 seems to mediate the transition of the U2, U5 and U6 snRNP-containing IL complex to the snRNP-free IS complex leading to efficient debranching and turnover of excised introns. May play a role in the differentiation of ameloblasts and odontoblasts or in the forming of the enamel extracellular matrix. In Bos taurus (Bovine), this protein is Tuftelin-interacting protein 11 (TFIP11).